A 372-amino-acid polypeptide reads, in one-letter code: Alanine dehydrogenase 2 (372 aa).

H95 is a catalytic residue. Residue 169–199 (KVTIIGGGQAGTNAAKIALGLGADVTILDVN) coordinates NAD(+).

This sequence belongs to the AlaDH/PNT family.

It carries out the reaction L-alanine + NAD(+) + H2O = pyruvate + NH4(+) + NADH + H(+). Its pathway is amino-acid degradation; L-alanine degradation via dehydrogenase pathway; NH(3) and pyruvate from L-alanine: step 1/1. Its function is as follows. May play a role in cell wall synthesis as L-alanine is an important constituent of the peptidoglycan layer. The sequence is that of Alanine dehydrogenase 2 (ald2) from Staphylococcus aureus (strain MRSA252).